A 253-amino-acid chain; its full sequence is MAMQSETPGNPASTVDPAEIAKFSKLSAEWWDPTGRMAPLHKINPHRVAFIRDAACRKFDRNPKSLNSLAGLRMIDIGCGAGLLCEPFTRLGAQVIGIDPSATNIAAAKVHAEKSRLLIDYRNTTAEAMDPRERFDIVLAMEVIEHVTDVGAFLGRCAAMMKPTGLMVVATLNRNWKSFALAIVGAEYVMRWLPRGTHQWDKFVTPEELTRHLQNSRLAVTEQAGLVYNPLADKWNLSADMDVNYMMVAESAG.

Positions 47, 78, 99, and 141 each coordinate S-adenosyl-L-methionine.

Belongs to the methyltransferase superfamily. UbiG/COQ3 family.

It catalyses the reaction a 3-demethylubiquinol + S-adenosyl-L-methionine = a ubiquinol + S-adenosyl-L-homocysteine + H(+). It carries out the reaction a 3-(all-trans-polyprenyl)benzene-1,2-diol + S-adenosyl-L-methionine = a 2-methoxy-6-(all-trans-polyprenyl)phenol + S-adenosyl-L-homocysteine + H(+). It participates in cofactor biosynthesis; ubiquinone biosynthesis. Its function is as follows. O-methyltransferase that catalyzes the 2 O-methylation steps in the ubiquinone biosynthetic pathway. In Rhodopseudomonas palustris (strain BisA53), this protein is Ubiquinone biosynthesis O-methyltransferase.